The following is a 606-amino-acid chain: Albumin A (606 aa).

Positions 1–18 (MKWITLICLLISSTLIES) are cleaved as a signal peptide. Residues 19-24 (RIIFKR) constitute a propeptide that is removed on maturation. Albumin domains follow at residues 22-211 (FKRD…ELMK), 212-401 (HSHS…RFMN), and 402-599 (EAKE…VLIE). His-30 lines the Cu cation pocket. Cystine bridges form between Cys-80–Cys-89, Cys-102–Cys-118, Cys-117–Cys-128, Cys-148–Cys-193, Cys-192–Cys-201, Cys-224–Cys-270, Cys-269–Cys-277, Cys-289–Cys-303, Cys-302–Cys-313, Cys-340–Cys-383, Cys-382–Cys-391, Cys-414–Cys-460, Cys-459–Cys-470, Cys-483–Cys-499, Cys-498–Cys-509, Cys-536–Cys-581, and Cys-580–Cys-589.

It belongs to the ALB/AFP/VDB family. Plasma.

It is found in the secreted. In terms of biological role, binds water, Ca(2+), Na(+), K(+), fatty acids, hormones, bilirubin and drugs. Its main function is the regulation of the colloidal osmotic pressure of blood. This is Albumin A (alb-a) from Xenopus laevis (African clawed frog).